Here is a 210-residue protein sequence, read N- to C-terminus: Ribosomal RNA small subunit methyltransferase G (210 aa).

S-adenosyl-L-methionine-binding positions include glycine 80, leucine 85, 131–132 (VE), and arginine 146.

The protein belongs to the methyltransferase superfamily. RNA methyltransferase RsmG family.

It is found in the cytoplasm. It catalyses the reaction guanosine(527) in 16S rRNA + S-adenosyl-L-methionine = N(7)-methylguanosine(527) in 16S rRNA + S-adenosyl-L-homocysteine. Specifically methylates the N7 position of guanine in position 527 of 16S rRNA. This chain is Ribosomal RNA small subunit methyltransferase G, found in Pasteurella multocida (strain Pm70).